The following is an 88-amino-acid chain: MHRGYALVVCSPGVTRTMIDIDDDLLARAAKELGTTTKKDTVHAALRAALRASAARSLMNRMAENATGTQDEALVNAMWRDGHPENTA.

Functionally, antitoxin component of a type II toxin-antitoxin (TA) system. This Mycobacterium tuberculosis (strain CDC 1551 / Oshkosh) protein is Antitoxin VapB21 (vapB21).